A 387-amino-acid polypeptide reads, in one-letter code: DNA double-strand break repair protein Mre11 (387 aa).

Mn(2+) contacts are provided by Asp-11, His-13, Asp-52, and Asp-87. His-88 functions as the Proton donor in the catalytic mechanism. Residues His-159, His-190, and His-192 each contribute to the Mn(2+) site.

This sequence belongs to the MRE11/RAD32 family. As to quaternary structure, homodimer. Forms a heterotetramer composed of two Mre11 subunits and two Rad50 subunits. Interacts with HerA. It depends on Mn(2+) as a cofactor.

With respect to regulation, nuclease activity is regulated by Rad50. In terms of biological role, part of the Rad50/Mre11 complex, which is involved in the early steps of DNA double-strand break (DSB) repair. The complex may facilitate opening of the processed DNA ends to aid in the recruitment of HerA and NurA. Mre11 binds to DSB ends and has both double-stranded 3'-5' exonuclease activity and single-stranded endonuclease activity. This chain is DNA double-strand break repair protein Mre11, found in Sulfurisphaera tokodaii (strain DSM 16993 / JCM 10545 / NBRC 100140 / 7) (Sulfolobus tokodaii).